The primary structure comprises 367 residues: tRNA/tmRNA (uracil-C(5))-methyltransferase (367 aa).

S-adenosyl-L-methionine contacts are provided by Gln-190, Tyr-218, Asn-223, Glu-239, and Asp-299. The active-site Nucleophile is Cys-324. Glu-358 functions as the Proton acceptor in the catalytic mechanism.

It belongs to the class I-like SAM-binding methyltransferase superfamily. RNA M5U methyltransferase family. TrmA subfamily.

The catalysed reaction is uridine(54) in tRNA + S-adenosyl-L-methionine = 5-methyluridine(54) in tRNA + S-adenosyl-L-homocysteine + H(+). It catalyses the reaction uridine(341) in tmRNA + S-adenosyl-L-methionine = 5-methyluridine(341) in tmRNA + S-adenosyl-L-homocysteine + H(+). Its function is as follows. Dual-specificity methyltransferase that catalyzes the formation of 5-methyluridine at position 54 (m5U54) in all tRNAs, and that of position 341 (m5U341) in tmRNA (transfer-mRNA). This is tRNA/tmRNA (uracil-C(5))-methyltransferase from Yersinia pestis bv. Antiqua (strain Antiqua).